A 221-amino-acid polypeptide reads, in one-letter code: Interleukin-12 subunit alpha (221 aa).

Residues 1 to 25 form the signal peptide; that stretch reads MCPLRSLLLISTLVLLHHLPHLSLG. Intrachain disulfides connect cysteine 39-cysteine 112, cysteine 66-cysteine 198, and cysteine 87-cysteine 125. N-linked (GlcNAc...) asparagine glycosylation is present at asparagine 95.

The protein belongs to the IL-6 superfamily. In terms of assembly, heterodimer with IL12B; disulfide-linked. This heterodimer is known as interleukin IL-12. Heterodimer with EBI3/IL27B; not disulfide-linked. This heterodimer is known as interleukin IL-35. Interacts with NBR1; this interaction promotes IL-12 secretion.

It is found in the secreted. Its function is as follows. Heterodimerizes with IL12B to form the IL-12 cytokine or with EBI3/IL27B to form the IL-35 cytokine. IL-12 is primarily produced by professional antigen-presenting cells (APCs) such as B-cells and dendritic cells (DCs) as well as macrophages and granulocytes and regulates T-cell and natural killer-cell responses, induces the production of interferon-gamma (IFN-gamma), favors the differentiation of T-helper 1 (Th1) cells and is an important link between innate resistance and adaptive immunity. Mechanistically, exerts its biological effects through a receptor composed of IL12R1 and IL12R2 subunits. Binding to the receptor results in the rapid tyrosine phosphorylation of a number of cellular substrates including the JAK family kinases TYK2 and JAK2. In turn, recruited STAT4 gets phosphorylated and translocates to the nucleus where it regulates cytokine/growth factor responsive genes. As part of IL-35, plays essential roles in maintaining the immune homeostasis of the liver microenvironment and also functions as an immune-suppressive cytokine. Mediates biological events through unconventional receptors composed of IL12RB2 and gp130/IL6ST heterodimers or homodimers. Signaling requires the transcription factors STAT1 and STAT4, which form a unique heterodimer that binds to distinct DNA sites. This chain is Interleukin-12 subunit alpha (IL12A), found in Capra hircus (Goat).